Consider the following 65-residue polypeptide: Disintegrin CC5 (65 aa).

The Disintegrin domain maps to 1 to 65; it reads MNSAHPCCDP…SDCPRNRYKS (65 aa). Intrachain disulfides connect Cys7–Cys30, Cys21–Cys27, Cys26–Cys51, and Cys39–Cys58. Positions 43–45 match the Cell attachment site motif; sequence RGD.

Belongs to the disintegrin family. Dimeric disintegrin subfamily. In terms of assembly, homodimer; disulfide-linked. In terms of tissue distribution, expressed by the venom gland.

It localises to the secreted. Binds and inhibits integrins alpha-IIb/beta-3 (ITGA2B/ITGB3), alpha-V/beta-3 (ITGAV/ITGB3) and alpha-5/beta-1 (ITGA5/ITGB1). This Cerastes cerastes (Horned desert viper) protein is Disintegrin CC5.